We begin with the raw amino-acid sequence, 118 residues long: MCDKEFMWALKNGDLDEVKDYVAKGEDVNRTLEGGRKPLHYAADCGQLEILEFLLLKGADINAPDKHHITPLLSAVYEGHVSCVKLLLSKGADKTVKGPDGLTALEATDNQAIKALLQ.

C2 bears the N-acetylcysteine mark. The ANK 1 repeat unit spans residues 2–30 (CDKEFMWALKNGDLDEVKDYVAKGEDVNR). N6-acetyllysine is present on residues K4, K11, and K24. At T31 the chain carries Phosphothreonine. 2 ANK repeats span residues 34–66 (GGRK…APDK) and 67–99 (HHIT…VKGP).

This sequence belongs to the myotrophin family. In terms of assembly, interacts with the heterodimer formed by CAPZA1 and CAPZB. Interacts with RELA.

Its subcellular location is the cytoplasm. The protein localises to the nucleus. It localises to the perinuclear region. In terms of biological role, plays a role in the regulation of the growth of actin filaments. Inhibits the activity of the F-actin-capping protein complex formed by the CAPZA1 and CAPZB heterodimer. Promotes dimerization of NF-kappa-B subunits and regulates NF-kappa-B transcription factor activity. Promotes growth of cardiomyocytes, but not cardiomyocyte proliferation. Promotes cardiac muscle hypertrophy. The polypeptide is Myotrophin (Mtpn) (Rattus norvegicus (Rat)).